Consider the following 617-residue polypeptide: V-type proton ATPase catalytic subunit A (617 aa).

257 to 264 serves as a coordination point for ATP; it reads GAFGCGKT.

This sequence belongs to the ATPase alpha/beta chains family. In terms of assembly, V-ATPase is a heteromultimeric enzyme composed of a peripheral catalytic V1 complex (components A to H) attached to an integral membrane V0 proton pore complex (components: a, c, c', c'', d, e, f and VOA1). In terms of processing, is a probable target for sumoylation.

The protein resides in the vacuole membrane. The enzyme catalyses ATP + H2O + 4 H(+)(in) = ADP + phosphate + 5 H(+)(out). In terms of biological role, catalytic subunit of the V1 complex of vacuolar(H+)-ATPase (V-ATPase), a multisubunit enzyme composed of a peripheral complex (V1) that hydrolyzes ATP and a membrane integral complex (V0) that translocates protons. V-ATPase is responsible for acidifying and maintaining the pH of intracellular compartments. Mediates oxidative stress response, filamentous growth, and plays an important role in virulence. This is V-type proton ATPase catalytic subunit A from Candida albicans (strain SC5314 / ATCC MYA-2876) (Yeast).